Reading from the N-terminus, the 337-residue chain is Inositol 2-dehydrogenase 1 (337 aa).

Belongs to the Gfo/Idh/MocA family. Homotetramer.

It carries out the reaction myo-inositol + NAD(+) = scyllo-inosose + NADH + H(+). Involved in the oxidation of myo-inositol (MI) to 2-keto-myo-inositol (2KMI or 2-inosose). The chain is Inositol 2-dehydrogenase 1 from Saccharopolyspora erythraea (strain ATCC 11635 / DSM 40517 / JCM 4748 / NBRC 13426 / NCIMB 8594 / NRRL 2338).